Here is a 477-residue protein sequence, read N- to C-terminus: uncharacterized protein (477 aa).

Residues 1-18 form the signal peptide; the sequence is MWTALVLVWISSVPLSRS. The Extracellular portion of the chain corresponds to 19 to 427; the sequence is HTVPAVPRHL…DPLTPSLVNK (409 aa). Residues Asn40, Asn51, and Asn77 are each glycosylated (N-linked (GlcNAc...) asparagine). Disordered regions lie at residues 79–103, 239–366, and 378–398; these read TRVTAETTPHGTNTSTPTTREGTAD, GTIN…TGGP, and KATAGTASAGPTSRSSGDVKV. The span at 85–97 shows a compositional bias: low complexity; the sequence is TTPHGTNTSTPTT. Polar residues-rich tracts occupy residues 253–288 and 298–309; these read PAKSTPTNTSSRNPIPTSGAQTQGTTIQVTTDQPVH and PSNTTLEPNTPK. N-linked (GlcNAc...) asparagine glycosylation occurs at Asn300. 3 stretches are compositionally biased toward low complexity: residues 310-326, 348-361, and 378-393; these read SVASTSSAVVTTTQVQT, TSPTTQPSPLLPTQ, and KATAGTASAGPTSRSS. A helical transmembrane segment spans residues 428–448; it reads MFLLVVLIVGVTLFIAVLMMF. At 449 to 477 the chain is on the cytoplasmic side; it reads ALQAYESYKKKDYTQVDYLINGMYADSEM.

Its subcellular location is the cell membrane. It localises to the golgi apparatus. The protein resides in the trans-Golgi network membrane. This is an uncharacterized protein from Rattus norvegicus (Rat).